The primary structure comprises 193 residues: MKIGILALQGAFAEHAKVLDQLGVESVELRNLDDFQQDQSDLSGLILPGGESTTMGKLLRDQNMLLPIREAILSGLPVFGTCAGLILLAKEITSQKESHLGTMDMVVERNAYGRQLGSFYTEAECKGVGKIPMTFIRGPIISSVGEGVEILATVNNQIVAAQEKNMLVSSFHPELTDDVRLHQYFINMCKEKS.

An L-glutamine-binding site is contributed by 50–52 (GES). The Nucleophile role is filled by Cys-82. Residues Arg-109 and 136–137 (IR) each bind L-glutamine. Residues His-172 and Glu-174 each act as charge relay system in the active site.

The protein belongs to the glutaminase PdxT/SNO family. In the presence of PdxS, forms a dodecamer of heterodimers. Only shows activity in the heterodimer.

It carries out the reaction aldehydo-D-ribose 5-phosphate + D-glyceraldehyde 3-phosphate + L-glutamine = pyridoxal 5'-phosphate + L-glutamate + phosphate + 3 H2O + H(+). The catalysed reaction is L-glutamine + H2O = L-glutamate + NH4(+). It participates in cofactor biosynthesis; pyridoxal 5'-phosphate biosynthesis. Functionally, catalyzes the hydrolysis of glutamine to glutamate and ammonia as part of the biosynthesis of pyridoxal 5'-phosphate. The resulting ammonia molecule is channeled to the active site of PdxS. The polypeptide is Pyridoxal 5'-phosphate synthase subunit PdxT (Streptococcus pneumoniae (strain JJA)).